The chain runs to 828 residues: Putative dual specificity tyrosine-phosphorylation-regulated kinase 3 homolog (828 aa).

Residues 1–14 (MVGSQEKKNNHIEL) show a composition bias toward basic and acidic residues. Residues 1–26 (MVGSQEKKNNHIELSETPATDKNNLN) form a disordered region. Residues 17–26 (TPATDKNNLN) show a composition bias toward polar residues. The Protein kinase domain occupies 276 to 589 (YEMLKIIGKG…PSEALKHPWL (314 aa)). ATP-binding positions include 282–290 (IGKGSFGQV) and Lys305. Asp402 (proton acceptor) is an active-site residue. At Ser616 the chain carries Phosphoserine.

Belongs to the protein kinase superfamily. CMGC Ser/Thr protein kinase family. MNB/DYRK subfamily. Autophosphorylated on tyrosine residues.

The catalysed reaction is L-seryl-[protein] + ATP = O-phospho-L-seryl-[protein] + ADP + H(+). It carries out the reaction L-threonyl-[protein] + ATP = O-phospho-L-threonyl-[protein] + ADP + H(+). The enzyme catalyses L-tyrosyl-[protein] + ATP = O-phospho-L-tyrosyl-[protein] + ADP + H(+). This Drosophila melanogaster (Fruit fly) protein is Putative dual specificity tyrosine-phosphorylation-regulated kinase 3 homolog (Dyrk3).